The chain runs to 265 residues: 3-methyl-2-oxobutanoate hydroxymethyltransferase (265 aa).

Aspartate 45 and aspartate 84 together coordinate Mg(2+). Residues 45-46 (DS), aspartate 84, and lysine 112 contribute to the 3-methyl-2-oxobutanoate site. Glutamate 114 provides a ligand contact to Mg(2+). The active-site Proton acceptor is the glutamate 181.

Belongs to the PanB family. In terms of assembly, homodecamer; pentamer of dimers. The cofactor is Mg(2+).

It localises to the cytoplasm. It carries out the reaction 3-methyl-2-oxobutanoate + (6R)-5,10-methylene-5,6,7,8-tetrahydrofolate + H2O = 2-dehydropantoate + (6S)-5,6,7,8-tetrahydrofolate. It functions in the pathway cofactor biosynthesis; (R)-pantothenate biosynthesis; (R)-pantoate from 3-methyl-2-oxobutanoate: step 1/2. In terms of biological role, catalyzes the reversible reaction in which hydroxymethyl group from 5,10-methylenetetrahydrofolate is transferred onto alpha-ketoisovalerate to form ketopantoate. The polypeptide is 3-methyl-2-oxobutanoate hydroxymethyltransferase (Pseudoalteromonas atlantica (strain T6c / ATCC BAA-1087)).